A 134-amino-acid polypeptide reads, in one-letter code: Profilin-2 (134 aa).

Residue threonine 114 is modified to Phosphothreonine.

The protein belongs to the profilin family. Occurs in many kinds of cells as a complex with monomeric actin in a 1:1 ratio. Phosphorylated by MAP kinases.

It localises to the cytoplasm. The protein localises to the cytoskeleton. Functionally, binds to actin and affects the structure of the cytoskeleton. At high concentrations, profilin prevents the polymerization of actin, whereas it enhances it at low concentrations. By binding to PIP2, it inhibits the formation of IP3 and DG. The protein is Profilin-2 (PRO2) of Nicotiana tabacum (Common tobacco).